The primary structure comprises 314 residues: tRNA dimethylallyltransferase (314 aa).

9-16 provides a ligand contact to ATP; it reads GPTAVGKT. Residue 11–16 coordinates substrate; it reads TAVGKT. The segment at 34–37 is interaction with substrate tRNA; that stretch reads DSMQ.

It belongs to the IPP transferase family. In terms of assembly, monomer. Requires Mg(2+) as cofactor.

The enzyme catalyses adenosine(37) in tRNA + dimethylallyl diphosphate = N(6)-dimethylallyladenosine(37) in tRNA + diphosphate. In terms of biological role, catalyzes the transfer of a dimethylallyl group onto the adenine at position 37 in tRNAs that read codons beginning with uridine, leading to the formation of N6-(dimethylallyl)adenosine (i(6)A). The polypeptide is tRNA dimethylallyltransferase (Clostridium tetani (strain Massachusetts / E88)).